The primary structure comprises 185 residues: Cuticle protein 18.6, isoform A (185 aa).

7 consecutive repeat copies span residues 21-24, 33-36, 41-44, 54-57, 133-136, 139-142, and 150-153. The 71-residue stretch at 64–134 folds into the Chitin-binding type R&amp;R domain; that stretch reads HPQYSFAYNV…KEAGAHPAAA (71 aa).

In terms of biological role, component of the cuticle of migratory locust which contains more than 100 different structural proteins. The polypeptide is Cuticle protein 18.6, isoform A (Locusta migratoria (Migratory locust)).